Here is a 312-residue protein sequence, read N- to C-terminus: Small ribosomal subunit protein RACK1 (312 aa).

WD repeat units follow at residues 9 to 42 (GHRG…ISWK), 63 to 93 (GHTG…RMWD), 105 to 135 (KHTK…RVWN), 148 to 180 (GHED…KVWN), 192 to 222 (GHSN…LLWD), 233 to 262 (NVES…SVYD), and 279 to 307 (PSEC…RVWS).

The protein belongs to the WD repeat G protein beta family. Ribosomal protein RACK1 subfamily.

This is Small ribosomal subunit protein RACK1 from Leishmania major.